Here is a 183-residue protein sequence, read N- to C-terminus: Hypoxanthine-guanine phosphoribosyltransferase (183 aa).

2 residues coordinate diphosphate: arginine 47 and glycine 48. 2 residues coordinate Mg(2+): glutamate 103 and aspartate 104. Residue aspartate 107 is the Proton acceptor of the active site. GMP contacts are provided by residues lysine 134, phenylalanine 155 to valine 156, and aspartate 162. Arginine 168 is a diphosphate binding site.

This sequence belongs to the purine/pyrimidine phosphoribosyltransferase family. It depends on Mg(2+) as a cofactor.

Its subcellular location is the cytoplasm. The catalysed reaction is IMP + diphosphate = hypoxanthine + 5-phospho-alpha-D-ribose 1-diphosphate. It catalyses the reaction GMP + diphosphate = guanine + 5-phospho-alpha-D-ribose 1-diphosphate. The protein operates within purine metabolism; IMP biosynthesis via salvage pathway; IMP from hypoxanthine: step 1/1. It participates in purine metabolism; GMP biosynthesis via salvage pathway; GMP from guanine: step 1/1. Its function is as follows. Purine salvage pathway enzyme that catalyzes the transfer of the ribosyl-5-phosphate group from 5-phospho-alpha-D-ribose 1-diphosphate (PRPP) to the N9 position of the 6-oxopurines hypoxanthine and guanine to form the corresponding ribonucleotides IMP (inosine 5'-monophosphate) and GMP (guanosine 5'-monophosphate), with the release of PPi. The chain is Hypoxanthine-guanine phosphoribosyltransferase (hpt) from Lactococcus lactis subsp. lactis (strain IL1403) (Streptococcus lactis).